Here is a 386-residue protein sequence, read N- to C-terminus: MLEFVRPLQSILQIKQVNSTDLVWRLHCRVTVFLLLLASLLLSARQYFGNPIDCVIGSGTVSSSTMNEFCWIMGTYISNDPNFVLDSTDLVKINAKIGHIPESERSYQKYYQWVVFILALQACMFSVPNFLWKAWEAGRLQSLCDGLTTPIVPDHWEKTRKKQLITYLSADFPRLHRTYLLRYCFCTLLNFCNVLLNIFLVNVIFSGFWSNYHPAVKALLSFDFPSWNRYNSQVFPKIAKCDFHFVGPSGSKQNRDGLCLLPLNVVNEKIFAFIWLWFLGLLVISMLNLLFWIVVLCSKGFRLWLLTAPLYPIRTSYVARALDGQGVGQWFLLYQLCRNLNPIVGRELVQSVSKAKGHNGHKTFRMPKGGEPDFYTDPEGYDEEGV.

Residues 1–21 (MLEFVRPLQSILQIKQVNSTD) lie on the Cytoplasmic side of the membrane. Residues 22–42 (LVWRLHCRVTVFLLLLASLLL) form a helical membrane-spanning segment. At 43–111 (SARQYFGNPI…ESERSYQKYY (69 aa)) the chain is on the extracellular side. The chain crosses the membrane as a helical span at residues 112-132 (QWVVFILALQACMFSVPNFLW). Residues 133 to 187 (KAWEAGRLQSLCDGLTTPIVPDHWEKTRKKQLITYLSADFPRLHRTYLLRYCFCT) lie on the Cytoplasmic side of the membrane. The chain crosses the membrane as a helical span at residues 188-208 (LLNFCNVLLNIFLVNVIFSGF). At 209 to 272 (WSNYHPAVKA…LNVVNEKIFA (64 aa)) the chain is on the extracellular side. Residues 273 to 293 (FIWLWFLGLLVISMLNLLFWI) traverse the membrane as a helical segment. The Cytoplasmic segment spans residues 294–386 (VVLCSKGFRL…DPEGYDEEGV (93 aa)). Residues 358–386 (HNGHKTFRMPKGGEPDFYTDPEGYDEEGV) form a disordered region. Positions 374–386 (FYTDPEGYDEEGV) are enriched in acidic residues.

This sequence belongs to the pannexin family.

The protein localises to the cell membrane. It is found in the cell junction. The protein resides in the gap junction. In terms of biological role, structural component of gap junctions. Required for normal development of ovary. Required for normal egg production after blood meal. Required for normal development of testis. (Microbial infection) Modulates the development of Plasmodium falciparum oocysts. This is Innexin inx4 from Anopheles gambiae (African malaria mosquito).